A 1516-amino-acid polypeptide reads, in one-letter code: Myosin-52 (1516 aa).

The Myosin N-terminal SH3-like domain maps to 7–62 (YKGLQCWIPDEQSQWIPGSIKDCRVEGEKAFLTVQDENENETVITVKPDDLNYEGR). Residues 73 to 766 (SDADDLTDLS…VTPLLESARD (694 aa)) form the Myosin motor domain. ATP is bound at residue 167–174 (GESGAGKT). Residues 647-669 (LVSLMSTINETNAHYIRCIKPNE) form an actin-binding region. IQ domains follow at residues 793-813 (RKRV…RHTE), 818-838 (SSNI…KEFI), 840-865 (TKNS…EKTK), 866-886 (HDAT…KHYK), and 888-917 (LQYY…ESTK). The stretch at 926–1034 (YRLESRLFEI…LKSQLKNYDM (109 aa)) forms a coiled coil. Phosphoserine is present on residues S1065 and S1072. The region spanning 1163–1431 (ERYCVHTLEY…SELSKNIVAE (269 aa)) is the Dilute domain.

The protein belongs to the TRAFAC class myosin-kinesin ATPase superfamily. Myosin family.

The protein localises to the cytoplasm. In terms of biological role, involved in cell wall deposition where it has a role in the localization of mok1. This chain is Myosin-52 (myo52), found in Schizosaccharomyces pombe (strain 972 / ATCC 24843) (Fission yeast).